A 295-amino-acid chain; its full sequence is Epidermal growth factor-like protein 8 (295 aa).

An N-terminal signal peptide occupies residues 1 to 25 (MGSRAELHTLLGGLSFLLLLMSGQG). An EMI domain is found at 34-112 (SQGVCSRQTL…RHPGALTCDE (79 aa)). 9 cysteine pairs are disulfide-bonded: cysteine 38/cysteine 97, cysteine 65/cysteine 71, cysteine 96/cysteine 110, cysteine 115/cysteine 125, cysteine 119/cysteine 131, cysteine 133/cysteine 142, cysteine 149/cysteine 160, cysteine 156/cysteine 169, and cysteine 171/cysteine 184. N-linked (GlcNAc...) asparagine glycosylation is present at asparagine 50. In terms of domain architecture, EGF-like 1 spans 111–143 (DEAICAKPCQNGGVCVRPDQCECAPGWGGRHCH). Residues 145-185 (DVDECRTGVTLCSHRCHNTAGSFTCGCPHGLVLGPDGRTCA) enclose the EGF-like 2; calcium-binding domain. The stretch at 202–233 (VREAGREDRALRREIRELRGRLERLEQWAGQA) forms a coiled coil.

The protein localises to the secreted. This Sus scrofa (Pig) protein is Epidermal growth factor-like protein 8 (EGFL8).